The primary structure comprises 447 residues: MREILHIQGGQCGNQIGSKFWEVVCDEHGIDPTGRYVGTSDLQLERVNVYYNEASCGRFVPRAVLMDLEPGTMDSVRTGPYGQIFRPDNFVFGQSGAGNNWAKGHYTEGAELIDSVLDVVRKEAENCDCLQGFQVCHSLGGGTGSGMGTLLISKIREEYPDRMMLTFSVFPSPKVSDTVVEPYNATLSVHQLVENADECMVLDNEALYDICFRTLKLTTPSFGDLNHLISATMSGVTCCLRFPGQLNSDLRKLAVNLIPFPRLHFFMVGFAPLTSRGSQMYRSLTVPELTQQMWDSKNMMCAADPRHGRYLTASAMFRGKMSTKEVDEQMINVQNKNSSYFVEWIPNNVKSSVCDIAPRGLSMASTFIGNSTSIQEMFRRVSEQFTAMFRRKAFLHWYTGEGMDEMEFTEAESNMNDLVAEYQQYQDATADEEEELYEDEDDADLQE.

Positions 11, 69, 138, 142, 143, 144, 204, and 226 each coordinate GTP. Glu-69 provides a ligand contact to Mg(2+).

Belongs to the tubulin family. In terms of assembly, dimer of alpha and beta chains. A typical microtubule is a hollow water-filled tube with an outer diameter of 25 nm and an inner diameter of 15 nM. Alpha-beta heterodimers associate head-to-tail to form protofilaments running lengthwise along the microtubule wall with the beta-tubulin subunit facing the microtubule plus end conferring a structural polarity. Microtubules usually have 13 protofilaments but different protofilament numbers can be found in some organisms and specialized cells. Mg(2+) is required as a cofactor.

Its subcellular location is the cytoplasm. The protein resides in the cytoskeleton. Its function is as follows. Tubulin is the major constituent of microtubules, a cylinder consisting of laterally associated linear protofilaments composed of alpha- and beta-tubulin heterodimers. Microtubules grow by the addition of GTP-tubulin dimers to the microtubule end, where a stabilizing cap forms. Below the cap, tubulin dimers are in GDP-bound state, owing to GTPase activity of alpha-tubulin. In Triticum aestivum (Wheat), this protein is Tubulin beta-5 chain (TUBB5).